Reading from the N-terminus, the 142-residue chain is Large ribosomal subunit protein bL21 (142 aa).

Positions 74-84 (RRRQNSKRTRG) are enriched in basic residues. Residues 74–142 (RRRQNSKRTR…KAAAKAESAE (69 aa)) form a disordered region. Positions 107 to 125 (KAAEKKAPKADAAEGEAAK) are enriched in basic and acidic residues. Over residues 126–135 (PKKAAPKKAA) the composition is skewed to basic residues.

The protein belongs to the bacterial ribosomal protein bL21 family. As to quaternary structure, part of the 50S ribosomal subunit. Contacts protein L20.

In terms of biological role, this protein binds to 23S rRNA in the presence of protein L20. The chain is Large ribosomal subunit protein bL21 from Brucella melitensis biotype 2 (strain ATCC 23457).